Consider the following 429-residue polypeptide: UDP-N-acetylglucosamine 1-carboxyvinyltransferase (429 aa).

22–23 contacts phosphoenolpyruvate; the sequence is KN. Arginine 102 serves as a coordination point for UDP-N-acetyl-alpha-D-glucosamine. Cysteine 126 acts as the Proton donor in catalysis. At cysteine 126 the chain carries 2-(S-cysteinyl)pyruvic acid O-phosphothioketal. UDP-N-acetyl-alpha-D-glucosamine-binding positions include 171–174, aspartate 316, and isoleucine 338; that span reads KVSV.

The protein belongs to the EPSP synthase family. MurA subfamily.

The protein resides in the cytoplasm. It catalyses the reaction phosphoenolpyruvate + UDP-N-acetyl-alpha-D-glucosamine = UDP-N-acetyl-3-O-(1-carboxyvinyl)-alpha-D-glucosamine + phosphate. It functions in the pathway cell wall biogenesis; peptidoglycan biosynthesis. Functionally, cell wall formation. Adds enolpyruvyl to UDP-N-acetylglucosamine. The chain is UDP-N-acetylglucosamine 1-carboxyvinyltransferase from Azorhizobium caulinodans (strain ATCC 43989 / DSM 5975 / JCM 20966 / LMG 6465 / NBRC 14845 / NCIMB 13405 / ORS 571).